Here is a 167-residue protein sequence, read N- to C-terminus: Protein tyrosine phosphatase type IVA 2 (167 aa).

One can recognise a Tyrosine-protein phosphatase domain in the interval 5 to 158 (APVEISYENM…YRPKMRLRFR (154 aa)). Cys-46 and Cys-101 form a disulfide bridge. Catalysis depends on Asp-69, which acts as the Proton donor. The Phosphocysteine intermediate role is filled by Cys-101. 102–107 (VAGLGR) serves as a coordination point for phosphate. A substrate-binding site is contributed by Arg-107. Position 164 is a cysteine methyl ester (Cys-164). A lipid anchor (S-farnesyl cysteine) is attached at Cys-164. A propeptide spans 165-167 (CVQ) (removed in mature form).

It belongs to the protein-tyrosine phosphatase family. In terms of assembly, in contrast to PTP4A1 and PTP4A3, does not interact with tubulin. Interacts with RABGGTB. In terms of processing, farnesylated. Farnesylation is required for membrane targeting and for interaction with RABGGTB. As to expression, expressed in skeletal muscle, and at lower levels in liver, lung, heart, kidney, brain, testis and spleen.

It localises to the cell membrane. The protein localises to the early endosome. Its subcellular location is the cytoplasm. The enzyme catalyses O-phospho-L-tyrosyl-[protein] + H2O = L-tyrosyl-[protein] + phosphate. Inhibited by sodium orthovanadate and pentamidine. Its function is as follows. Protein tyrosine phosphatase which stimulates progression from G1 into S phase during mitosis. Inhibits geranylgeranyl transferase type II activity by blocking the association between RABGGTA and RABGGTB. The protein is Protein tyrosine phosphatase type IVA 2 (Ptp4a2) of Mus musculus (Mouse).